Reading from the N-terminus, the 167-residue chain is Leukotoxin-activating lysine-acyltransferase LktC serotype T3 (167 aa).

Catalysis depends on residues H22 and D91.

This sequence belongs to the RTX toxin acyltransferase family.

It is found in the cytoplasm. The catalysed reaction is a fatty acyl-[ACP] + L-lysyl-[protein] = N(6)-(fatty acyl)-L-lysyl-[protein] + holo-[ACP] + H(+). In terms of biological role, involved in fatty acylation of the protoxin (LktA) at two internal lysine residues, thereby converting it to the active toxin. The polypeptide is Leukotoxin-activating lysine-acyltransferase LktC serotype T3 (lktC) (Mannheimia haemolytica (Pasteurella haemolytica)).